A 703-amino-acid polypeptide reads, in one-letter code: DNA ligase (703 aa).

NAD(+)-binding positions include 44–48 (DAEYD), 93–94 (SL), and E127. The active-site N6-AMP-lysine intermediate is K129. NAD(+) contacts are provided by R150, E186, K302, and K326. Zn(2+)-binding residues include C420, C422, C444, and C450. The region spanning 625 to 703 (VADSPVAGKT…EDMWFQRIGA (79 aa)) is the BRCT domain.

Belongs to the NAD-dependent DNA ligase family. LigA subfamily. Requires Mg(2+) as cofactor. The cofactor is Mn(2+).

The enzyme catalyses NAD(+) + (deoxyribonucleotide)n-3'-hydroxyl + 5'-phospho-(deoxyribonucleotide)m = (deoxyribonucleotide)n+m + AMP + beta-nicotinamide D-nucleotide.. DNA ligase that catalyzes the formation of phosphodiester linkages between 5'-phosphoryl and 3'-hydroxyl groups in double-stranded DNA using NAD as a coenzyme and as the energy source for the reaction. It is essential for DNA replication and repair of damaged DNA. The protein is DNA ligase of Chelativorans sp. (strain BNC1).